Reading from the N-terminus, the 457-residue chain is Reticulon-like protein B18 (457 aa).

Positions 94–183 (AAVTARRSKT…SPSSDQPQDV (90 aa)) are disordered. The span at 124–136 (LRSEAMVDTKENT) shows a compositional bias: basic and acidic residues. The segment covering 149–163 (NQRKQKKLGRSKKEK) has biased composition (basic residues). Residues 166–183 (SVPLLASPSPSSDQPQDV) are compositionally biased toward low complexity. The Reticulon domain maps to 195-385 (ISDLIMWRDV…AFWNLTSLKT (191 aa)). The next 4 membrane-spanning stretches (helical) occupy residues 208 to 228 (TLWF…AKGF), 230 to 250 (FSVF…SFLS), 314 to 334 (YGYL…SFTI), and 377 to 397 (FWNL…VVVI). The tract at residues 407–457 (DSEDEEEKKQQEKTHPEQQKSPEDKSTSPRSAEEEQALVLVAETKAPKKLY) is disordered. Positions 413–439 (EKKQQEKTHPEQQKSPEDKSTSPRSAE) are enriched in basic and acidic residues.

The protein resides in the endoplasmic reticulum membrane. This Arabidopsis thaliana (Mouse-ear cress) protein is Reticulon-like protein B18 (RTNLB18).